The sequence spans 878 residues: Alanine--tRNA ligase (878 aa).

Residues H562, H566, C670, and H674 each coordinate Zn(2+).

This sequence belongs to the class-II aminoacyl-tRNA synthetase family. Zn(2+) is required as a cofactor.

It localises to the cytoplasm. It carries out the reaction tRNA(Ala) + L-alanine + ATP = L-alanyl-tRNA(Ala) + AMP + diphosphate. In terms of biological role, catalyzes the attachment of alanine to tRNA(Ala) in a two-step reaction: alanine is first activated by ATP to form Ala-AMP and then transferred to the acceptor end of tRNA(Ala). Also edits incorrectly charged Ser-tRNA(Ala) and Gly-tRNA(Ala) via its editing domain. This is Alanine--tRNA ligase from Acinetobacter baumannii (strain ACICU).